The chain runs to 779 residues: Endonuclease MutS2 (779 aa).

ATP is bound at residue 328 to 335; the sequence is GPNTGGKT. Residues 704-779 enclose the Smr domain; that stretch reads LDLRGKRYEE…GSGATIVTLG (76 aa).

It belongs to the DNA mismatch repair MutS family. MutS2 subfamily. Homodimer. Binds to stalled ribosomes, contacting rRNA.

Its function is as follows. Endonuclease that is involved in the suppression of homologous recombination and thus may have a key role in the control of bacterial genetic diversity. Functionally, acts as a ribosome collision sensor, splitting the ribosome into its 2 subunits. Detects stalled/collided 70S ribosomes which it binds and splits by an ATP-hydrolysis driven conformational change. Acts upstream of the ribosome quality control system (RQC), a ribosome-associated complex that mediates the extraction of incompletely synthesized nascent chains from stalled ribosomes and their subsequent degradation. Probably generates substrates for RQC. This is Endonuclease MutS2 from Streptococcus agalactiae serotype Ia (strain ATCC 27591 / A909 / CDC SS700).